We begin with the raw amino-acid sequence, 114 residues long: Non-specific lipid-transfer protein 2 (114 aa).

A signal peptide spans 1 to 23 (MEMVNKIACFVLLCMVVVAPHAE). 4 disulfides stabilise this stretch: Cys27–Cys73, Cys37–Cys50, Cys51–Cys96, and Cys71–Cys110.

The protein belongs to the plant LTP family.

Plant non-specific lipid-transfer proteins transfer phospholipids as well as galactolipids across membranes. May play a role in wax or cutin deposition in the cell walls of expanding epidermal cells and certain secretory tissues. The protein is Non-specific lipid-transfer protein 2 (LTP2) of Solanum pennellii (Tomato).